Here is a 505-residue protein sequence, read N- to C-terminus: Glycerol kinase (505 aa).

T17 lines the ADP pocket. T17, T18, and S19 together coordinate ATP. T17 lines the sn-glycerol 3-phosphate pocket. Residue R21 coordinates ADP. Residues R87, E88, Y139, and D250 each coordinate sn-glycerol 3-phosphate. Glycerol-binding residues include R87, E88, Y139, D250, and Q251. ADP is bound by residues T272 and G315. Residues T272, G315, Q319, and G416 each coordinate ATP. ADP-binding residues include G416 and N420.

Belongs to the FGGY kinase family.

The catalysed reaction is glycerol + ATP = sn-glycerol 3-phosphate + ADP + H(+). Its pathway is polyol metabolism; glycerol degradation via glycerol kinase pathway; sn-glycerol 3-phosphate from glycerol: step 1/1. Inhibited by fructose 1,6-bisphosphate (FBP). Key enzyme in the regulation of glycerol uptake and metabolism. Catalyzes the phosphorylation of glycerol to yield sn-glycerol 3-phosphate. The chain is Glycerol kinase from Azotobacter vinelandii (strain DJ / ATCC BAA-1303).